Here is a 234-residue protein sequence, read N- to C-terminus: Demethylmenaquinone methyltransferase (234 aa).

S-adenosyl-L-methionine-binding positions include Thr62, Asp80, 100-101 (DA), and Ser117.

Belongs to the class I-like SAM-binding methyltransferase superfamily. MenG/UbiE family.

It carries out the reaction a 2-demethylmenaquinol + S-adenosyl-L-methionine = a menaquinol + S-adenosyl-L-homocysteine + H(+). It participates in quinol/quinone metabolism; menaquinone biosynthesis; menaquinol from 1,4-dihydroxy-2-naphthoate: step 2/2. Functionally, methyltransferase required for the conversion of demethylmenaquinol (DMKH2) to menaquinol (MKH2). The sequence is that of Demethylmenaquinone methyltransferase from Mycobacterium bovis (strain ATCC BAA-935 / AF2122/97).